The sequence spans 571 residues: Putative fatty-acid--CoA ligase fadD11 (571 aa).

The segment covering 1–19 (MARLRGAGAAGRCRPGRFG) has biased composition (low complexity). Disordered stretches follow at residues 1-35 (MARLRGAGAAGRCRPGRFGSSARRHGLADDGEPDR) and 67-91 (RQRGDQGGHLRATVRRSRSRQRCAH). Basic residues predominate over residues 78–91 (ATVRRSRSRQRCAH). Helical transmembrane passes span 314 to 334 (TLAFFAGIGIPIAEIWGMSEL) and 431 to 451 (ANIENTILAACPMVGVMMAIG).

This sequence belongs to the ATP-dependent AMP-binding enzyme family.

The protein resides in the cell membrane. This chain is Putative fatty-acid--CoA ligase fadD11 (fadD11), found in Mycobacterium tuberculosis (strain CDC 1551 / Oshkosh).